The following is a 315-amino-acid chain: Acetyl-coenzyme A carboxylase carboxyl transferase subunit alpha (315 aa).

The CoA carboxyltransferase C-terminal domain occupies 36–289 (LSKKRLELME…RKAVAAELKI (254 aa)).

The protein belongs to the AccA family. As to quaternary structure, acetyl-CoA carboxylase is a heterohexamer composed of biotin carboxyl carrier protein (AccB), biotin carboxylase (AccC) and two subunits each of ACCase subunit alpha (AccA) and ACCase subunit beta (AccD).

Its subcellular location is the cytoplasm. The catalysed reaction is N(6)-carboxybiotinyl-L-lysyl-[protein] + acetyl-CoA = N(6)-biotinyl-L-lysyl-[protein] + malonyl-CoA. Its pathway is lipid metabolism; malonyl-CoA biosynthesis; malonyl-CoA from acetyl-CoA: step 1/1. Its function is as follows. Component of the acetyl coenzyme A carboxylase (ACC) complex. First, biotin carboxylase catalyzes the carboxylation of biotin on its carrier protein (BCCP) and then the CO(2) group is transferred by the carboxyltransferase to acetyl-CoA to form malonyl-CoA. This chain is Acetyl-coenzyme A carboxylase carboxyl transferase subunit alpha, found in Francisella tularensis subsp. tularensis (strain FSC 198).